We begin with the raw amino-acid sequence, 571 residues long: uncharacterized protein (571 aa).

The next 5 helical transmembrane spans lie at V10–G29, V36–F55, W65–L87, A96–F118, and A166–L188. One can recognise an RCK C-terminal domain in the interval T294–F378. The next 6 helical transmembrane spans lie at L388–V406, V411–S433, L446–A465, L480–L502, L509–L531, and V546–A568.

Belongs to the AAE transporter (TC 2.A.81) family.

Its subcellular location is the cell membrane. This is an uncharacterized protein from Bordetella bronchiseptica (strain ATCC BAA-588 / NCTC 13252 / RB50) (Alcaligenes bronchisepticus).